The sequence spans 244 residues: tRNA uridine(34) hydroxylase (244 aa).

A Rhodanese domain is found at 129–219 (QGRELVMLDT…GILKYFEETD (91 aa)). Catalysis depends on cysteine 183, which acts as the Cysteine persulfide intermediate.

Belongs to the TrhO family.

The enzyme catalyses uridine(34) in tRNA + AH2 + O2 = 5-hydroxyuridine(34) in tRNA + A + H2O. Its function is as follows. Catalyzes oxygen-dependent 5-hydroxyuridine (ho5U) modification at position 34 in tRNAs. This Bordetella bronchiseptica (strain ATCC BAA-588 / NCTC 13252 / RB50) (Alcaligenes bronchisepticus) protein is tRNA uridine(34) hydroxylase.